Reading from the N-terminus, the 115-residue chain is Large ribosomal subunit protein bL20c (115 aa).

The protein belongs to the bacterial ribosomal protein bL20 family.

Its subcellular location is the plastid. It localises to the chloroplast. In terms of biological role, binds directly to 23S ribosomal RNA and is necessary for the in vitro assembly process of the 50S ribosomal subunit. It is not involved in the protein synthesizing functions of that subunit. This Chlorokybus atmophyticus (Soil alga) protein is Large ribosomal subunit protein bL20c.